The primary structure comprises 287 residues: Nucleotide-binding protein HEAR2885 (287 aa).

8-15 (GISGSGKS) contributes to the ATP binding site. 57 to 60 (DVRS) is a GTP binding site.

Belongs to the RapZ-like family.

In terms of biological role, displays ATPase and GTPase activities. This is Nucleotide-binding protein HEAR2885 from Herminiimonas arsenicoxydans.